The primary structure comprises 309 residues: NAD kinase (309 aa).

The active-site Proton acceptor is the aspartate 89. NAD(+)-binding positions include 89–90 (DG), 163–164 (NE), histidine 174, arginine 191, aspartate 193, and 204–209 (TAYALS).

Belongs to the NAD kinase family. A divalent metal cation is required as a cofactor.

The protein localises to the cytoplasm. The enzyme catalyses NAD(+) + ATP = ADP + NADP(+) + H(+). Its function is as follows. Involved in the regulation of the intracellular balance of NAD and NADP, and is a key enzyme in the biosynthesis of NADP. Catalyzes specifically the phosphorylation on 2'-hydroxyl of the adenosine moiety of NAD to yield NADP. This chain is NAD kinase, found in Shewanella baltica (strain OS155 / ATCC BAA-1091).